A 414-amino-acid chain; its full sequence is Histidine--tRNA ligase (414 aa).

The protein belongs to the class-II aminoacyl-tRNA synthetase family. Homodimer.

It localises to the cytoplasm. It catalyses the reaction tRNA(His) + L-histidine + ATP = L-histidyl-tRNA(His) + AMP + diphosphate + H(+). This Ehrlichia ruminantium (strain Welgevonden) protein is Histidine--tRNA ligase.